The sequence spans 420 residues: Tyrosine--tRNA ligase 2 (420 aa).

An L-tyrosine-binding site is contributed by tyrosine 36. The 'HIGH' region motif lies at 41 to 50 (PTADSLHIGH). 2 residues coordinate L-tyrosine: tyrosine 171 and glutamine 175. Positions 231 to 235 (KFGKT) match the 'KMSKS' region motif. Residue lysine 234 participates in ATP binding. One can recognise an S4 RNA-binding domain in the interval 354-420 (LSLVDLLVTS…GKKKYFLLKY (67 aa)).

Belongs to the class-I aminoacyl-tRNA synthetase family. TyrS type 1 subfamily. Homodimer.

It localises to the cytoplasm. The catalysed reaction is tRNA(Tyr) + L-tyrosine + ATP = L-tyrosyl-tRNA(Tyr) + AMP + diphosphate + H(+). In terms of biological role, catalyzes the attachment of tyrosine to tRNA(Tyr) in a two-step reaction: tyrosine is first activated by ATP to form Tyr-AMP and then transferred to the acceptor end of tRNA(Tyr). The sequence is that of Tyrosine--tRNA ligase 2 from Enterococcus faecalis (strain ATCC 700802 / V583).